Consider the following 372-residue polypeptide: PqqA peptide cyclase (372 aa).

The Radical SAM core domain maps to Ala4 to Arg220. Residues Cys18, Cys22, and Cys25 each contribute to the [4Fe-4S] cluster site.

The protein belongs to the radical SAM superfamily. PqqE family. Interacts with PqqD. The interaction is necessary for activity of PqqE. It depends on [4Fe-4S] cluster as a cofactor.

It carries out the reaction [PQQ precursor protein] + S-adenosyl-L-methionine = E-Y cross-linked-[PQQ precursor protein] + 5'-deoxyadenosine + L-methionine + H(+). The protein operates within cofactor biosynthesis; pyrroloquinoline quinone biosynthesis. Catalyzes the cross-linking of a glutamate residue and a tyrosine residue in the PqqA protein as part of the biosynthesis of pyrroloquinoline quinone (PQQ). This is PqqA peptide cyclase from Xanthomonas axonopodis pv. citri (strain 306).